Here is a 415-residue protein sequence, read N- to C-terminus: ATP-dependent RNA helicase RhlB (415 aa).

The short motif at 9 to 37 is the Q motif element; the sequence is KKFSDFALYPPIVEVLDSKGFNNCTPIQA. Positions 40–219 constitute a Helicase ATP-binding domain; it reads LPTTLAGKDV…FEHMNNAEYV (180 aa). Residue 53–60 participates in ATP binding; it reads AQTGTGKT. The short motif at 165–168 is the DEAD box element; sequence DEAD. Residues 245-390 form the Helicase C-terminal domain; that stretch reads RLLQTLIEEE…VSKYNSDALL (146 aa). A disordered region spans residues 396–415; the sequence is PKRLTRRRSGAPRHNRKRPG. Over residues 398–415 the composition is skewed to basic residues; that stretch reads RLTRRRSGAPRHNRKRPG.

Belongs to the DEAD box helicase family. RhlB subfamily. In terms of assembly, component of the RNA degradosome, which is a multiprotein complex involved in RNA processing and mRNA degradation.

It localises to the cytoplasm. It carries out the reaction ATP + H2O = ADP + phosphate + H(+). Its function is as follows. DEAD-box RNA helicase involved in RNA degradation. Has RNA-dependent ATPase activity and unwinds double-stranded RNA. The chain is ATP-dependent RNA helicase RhlB from Sodalis glossinidius (strain morsitans).